We begin with the raw amino-acid sequence, 459 residues long: Methylenetetrahydrofolate--tRNA-(uracil-5-)-methyltransferase TrmFO (459 aa).

FAD is bound at residue 11-16 (GAGLAG).

The protein belongs to the MnmG family. TrmFO subfamily. It depends on FAD as a cofactor.

The protein localises to the cytoplasm. It catalyses the reaction uridine(54) in tRNA + (6R)-5,10-methylene-5,6,7,8-tetrahydrofolate + NADH + H(+) = 5-methyluridine(54) in tRNA + (6S)-5,6,7,8-tetrahydrofolate + NAD(+). The catalysed reaction is uridine(54) in tRNA + (6R)-5,10-methylene-5,6,7,8-tetrahydrofolate + NADPH + H(+) = 5-methyluridine(54) in tRNA + (6S)-5,6,7,8-tetrahydrofolate + NADP(+). Its function is as follows. Catalyzes the folate-dependent formation of 5-methyl-uridine at position 54 (M-5-U54) in all tRNAs. This is Methylenetetrahydrofolate--tRNA-(uracil-5-)-methyltransferase TrmFO from Synechococcus sp. (strain CC9311).